Here is a 347-residue protein sequence, read N- to C-terminus: tRNA N6-adenosine threonylcarbamoyltransferase (347 aa).

2 residues coordinate Fe cation: H113 and H117. Substrate is bound by residues 136-140 (IVSGG), D170, G183, D187, and N282. D310 is a binding site for Fe cation.

This sequence belongs to the KAE1 / TsaD family. It depends on Fe(2+) as a cofactor.

The protein resides in the cytoplasm. The catalysed reaction is L-threonylcarbamoyladenylate + adenosine(37) in tRNA = N(6)-L-threonylcarbamoyladenosine(37) in tRNA + AMP + H(+). Required for the formation of a threonylcarbamoyl group on adenosine at position 37 (t(6)A37) in tRNAs that read codons beginning with adenine. Is involved in the transfer of the threonylcarbamoyl moiety of threonylcarbamoyl-AMP (TC-AMP) to the N6 group of A37, together with TsaE and TsaB. TsaD likely plays a direct catalytic role in this reaction. In Bifidobacterium adolescentis (strain ATCC 15703 / DSM 20083 / NCTC 11814 / E194a), this protein is tRNA N6-adenosine threonylcarbamoyltransferase.